Here is a 170-residue protein sequence, read N- to C-terminus: Ribosome maturation factor RimM (170 aa).

Residues 98–170 (PDEYYWVDLE…LIVVDWDPDF (73 aa)) form the PRC barrel domain.

It belongs to the RimM family. In terms of assembly, binds ribosomal protein uS19.

The protein localises to the cytoplasm. Functionally, an accessory protein needed during the final step in the assembly of 30S ribosomal subunit, possibly for assembly of the head region. Essential for efficient processing of 16S rRNA. May be needed both before and after RbfA during the maturation of 16S rRNA. It has affinity for free ribosomal 30S subunits but not for 70S ribosomes. The protein is Ribosome maturation factor RimM of Xanthomonas axonopodis pv. citri (strain 306).